Reading from the N-terminus, the 209-residue chain is Large ribosomal subunit protein uL3 (209 aa).

Residues 129–153 (SRGPMSHGSKFHRAPGSMGAASDPS) are disordered.

It belongs to the universal ribosomal protein uL3 family. As to quaternary structure, part of the 50S ribosomal subunit. Forms a cluster with proteins L14 and L19.

Functionally, one of the primary rRNA binding proteins, it binds directly near the 3'-end of the 23S rRNA, where it nucleates assembly of the 50S subunit. In Clostridium perfringens (strain 13 / Type A), this protein is Large ribosomal subunit protein uL3.